A 465-amino-acid polypeptide reads, in one-letter code: UDP-N-acetylmuramate--L-alanine ligase (465 aa).

An ATP-binding site is contributed by Gly115 to Thr121.

Belongs to the MurCDEF family.

The protein localises to the cytoplasm. It catalyses the reaction UDP-N-acetyl-alpha-D-muramate + L-alanine + ATP = UDP-N-acetyl-alpha-D-muramoyl-L-alanine + ADP + phosphate + H(+). The protein operates within cell wall biogenesis; peptidoglycan biosynthesis. Cell wall formation. The protein is UDP-N-acetylmuramate--L-alanine ligase of Renibacterium salmoninarum (strain ATCC 33209 / DSM 20767 / JCM 11484 / NBRC 15589 / NCIMB 2235).